The following is a 316-amino-acid chain: Putative ring-cleaving dioxygenase MhqA (316 aa).

2 VOC domains span residues 5-131 and 154-278; these read GIHH…LTAD and GLGP…LSTD. Residues H8, H226, and E274 each contribute to the Fe cation site.

The protein belongs to the extradiol ring-cleavage dioxygenase family. It depends on Fe(2+) as a cofactor.

It is found in the cytoplasm. Functionally, putative ring-cleavage dioxygenase that may contribute to the degradation of aromatic compounds. The sequence is that of Putative ring-cleaving dioxygenase MhqA (mhqA) from Bacillus subtilis (strain 168).